The following is a 137-amino-acid chain: Nucleoside diphosphate kinase (137 aa).

ATP is bound by residues K9, F57, R85, T91, R102, and N112. H115 acts as the Pros-phosphohistidine intermediate in catalysis.

This sequence belongs to the NDK family. In terms of assembly, homotetramer. Mg(2+) serves as cofactor.

It is found in the cytoplasm. The enzyme catalyses a 2'-deoxyribonucleoside 5'-diphosphate + ATP = a 2'-deoxyribonucleoside 5'-triphosphate + ADP. The catalysed reaction is a ribonucleoside 5'-diphosphate + ATP = a ribonucleoside 5'-triphosphate + ADP. In terms of biological role, major role in the synthesis of nucleoside triphosphates other than ATP. The ATP gamma phosphate is transferred to the NDP beta phosphate via a ping-pong mechanism, using a phosphorylated active-site intermediate. This chain is Nucleoside diphosphate kinase, found in Campylobacter jejuni subsp. jejuni serotype O:6 (strain 81116 / NCTC 11828).